The following is a 102-amino-acid chain: Small ribosomal subunit protein uS10 (102 aa).

This sequence belongs to the universal ribosomal protein uS10 family. Part of the 30S ribosomal subunit.

Functionally, involved in the binding of tRNA to the ribosomes. The polypeptide is Small ribosomal subunit protein uS10 (Methylobacterium nodulans (strain LMG 21967 / CNCM I-2342 / ORS 2060)).